The following is a 589-amino-acid chain: Phenylalanine--tRNA ligase beta subunit (589 aa).

In terms of domain architecture, B5 spans 290-368; that stretch reads LNPTCFKADI…IAYGYDNLKH (79 aa). Mg(2+) is bound by residues Asp346, Asp352, Glu355, and Asp356.

The protein belongs to the phenylalanyl-tRNA synthetase beta subunit family. Type 2 subfamily. In terms of assembly, tetramer of two alpha and two beta subunits. The cofactor is Mg(2+).

It is found in the cytoplasm. The protein localises to the nucleus. It carries out the reaction tRNA(Phe) + L-phenylalanine + ATP = L-phenylalanyl-tRNA(Phe) + AMP + diphosphate + H(+). The chain is Phenylalanine--tRNA ligase beta subunit (frs1) from Schizosaccharomyces pombe (strain 972 / ATCC 24843) (Fission yeast).